The chain runs to 402 residues: UDP-glucose 6-dehydrogenase (402 aa).

NAD(+) is bound by residues 2-19 (KIAVAGSGYVGLSLGVLL), valine 11, aspartate 29, lysine 34, threonine 83, threonine 118, and glutamate 145. Residues 141–145 (EFLRE), lysine 204, asparagine 208, 249–253 (YNNPS), and glycine 257 contribute to the substrate site. Tyrosine 259 serves as a coordination point for NAD(+). The active-site Nucleophile is cysteine 260. Lysine 263 contributes to the NAD(+) binding site. Lysine 320 lines the substrate pocket. Position 327 (arginine 327) interacts with NAD(+).

This sequence belongs to the UDP-glucose/GDP-mannose dehydrogenase family.

It catalyses the reaction UDP-alpha-D-glucose + 2 NAD(+) + H2O = UDP-alpha-D-glucuronate + 2 NADH + 3 H(+). The protein operates within nucleotide-sugar biosynthesis; UDP-alpha-D-glucuronate biosynthesis; UDP-alpha-D-glucuronate from UDP-alpha-D-glucose: step 1/1. In terms of biological role, catalyzes the formation of UDP-glucuronic acid which is required for capsular hyaluronic acid synthesis. This chain is UDP-glucose 6-dehydrogenase (hasB), found in Streptococcus pyogenes serotype M1.